The following is a 241-amino-acid chain: Small ribosomal subunit protein uS3 (241 aa).

One can recognise a KH type-2 domain in the interval 39–107; sequence IREILHKELK…DVVINIVEIR (69 aa). Residues 217 to 241 form a disordered region; it reads KRMAEGETGGGGDRGGRQRRDNAAV. Basic and acidic residues predominate over residues 230 to 241; that stretch reads RGGRQRRDNAAV.

The protein belongs to the universal ribosomal protein uS3 family. As to quaternary structure, part of the 30S ribosomal subunit. Forms a tight complex with proteins S10 and S14.

In terms of biological role, binds the lower part of the 30S subunit head. Binds mRNA in the 70S ribosome, positioning it for translation. The protein is Small ribosomal subunit protein uS3 of Bradyrhizobium diazoefficiens (strain JCM 10833 / BCRC 13528 / IAM 13628 / NBRC 14792 / USDA 110).